Reading from the N-terminus, the 105-residue chain is Gastrin/cholecystokinin-like peptide (105 aa).

The first 20 residues, 1 to 20, serve as a signal peptide directing secretion; it reads MKTKVFLGLILSAAVTACLC. Positions 21–38 are excised as a propeptide; sequence RPAAKAPGGSHRPTSSLA. Residues 24–51 are disordered; it reads AKAPGGSHRPTSSLARRDWPEPPSQEQQ. At Tyr87 the chain carries Sulfotyrosine. The residue at position 93 (Phe93) is a Phenylalanine amide. A propeptide spanning residues 97–105 is cleaved from the precursor; that stretch reads STEDAADAA.

Belongs to the gastrin/cholecystokinin family.

It is found in the secreted. Its function is as follows. Potent stimulus of gastric acid, but not of pancreatic secretion. This Gallus gallus (Chicken) protein is Gastrin/cholecystokinin-like peptide.